The primary structure comprises 341 residues: Flagellar P-ring protein (341 aa).

The first 19 residues, 1–19 (MKQVFLWLIFVLAFHKLLA), serve as a signal peptide directing secretion.

The protein belongs to the FlgI family. As to quaternary structure, the basal body constitutes a major portion of the flagellar organelle and consists of four rings (L,P,S, and M) mounted on a central rod.

It localises to the periplasm. The protein localises to the bacterial flagellum basal body. Functionally, assembles around the rod to form the L-ring and probably protects the motor/basal body from shearing forces during rotation. This is Flagellar P-ring protein from Helicobacter acinonychis (strain Sheeba).